The sequence spans 317 residues: Lipoyl synthase (317 aa).

Cysteine 55, cysteine 60, cysteine 66, cysteine 81, cysteine 85, cysteine 88, and serine 292 together coordinate [4Fe-4S] cluster. The Radical SAM core domain maps to 67 to 281 (WEDREATFLI…ERYATEIGFA (215 aa)).

This sequence belongs to the radical SAM superfamily. Lipoyl synthase family. [4Fe-4S] cluster is required as a cofactor.

It is found in the cytoplasm. The catalysed reaction is [[Fe-S] cluster scaffold protein carrying a second [4Fe-4S](2+) cluster] + N(6)-octanoyl-L-lysyl-[protein] + 2 oxidized [2Fe-2S]-[ferredoxin] + 2 S-adenosyl-L-methionine + 4 H(+) = [[Fe-S] cluster scaffold protein] + N(6)-[(R)-dihydrolipoyl]-L-lysyl-[protein] + 4 Fe(3+) + 2 hydrogen sulfide + 2 5'-deoxyadenosine + 2 L-methionine + 2 reduced [2Fe-2S]-[ferredoxin]. Its pathway is protein modification; protein lipoylation via endogenous pathway; protein N(6)-(lipoyl)lysine from octanoyl-[acyl-carrier-protein]: step 2/2. Functionally, catalyzes the radical-mediated insertion of two sulfur atoms into the C-6 and C-8 positions of the octanoyl moiety bound to the lipoyl domains of lipoate-dependent enzymes, thereby converting the octanoylated domains into lipoylated derivatives. The polypeptide is Lipoyl synthase (Mycolicibacterium gilvum (strain PYR-GCK) (Mycobacterium gilvum (strain PYR-GCK))).